Reading from the N-terminus, the 178-residue chain is Protein SPEAR1 (178 aa).

Disordered stretches follow at residues Met-1–Leu-48 and His-139–Leu-178. Low complexity predominate over residues Ser-14–Pro-28. Residues Arg-46 to Glu-54 carry the SPL motif. Residues Asp-144–Asn-167 show a composition bias toward polar residues. An EAR motif is present at residues Val-170–Leu-176.

As to quaternary structure, interacts with SPL and SPEAR2. As to expression, not detected in leaves.

Functionally, adapter-like transcriptional repressor recruiting TPL/TPR corepressors to inhibit TCP transcription factors. The protein is Protein SPEAR1 of Arabidopsis thaliana (Mouse-ear cress).